The sequence spans 487 residues: MKPSTEWWRYLAPLAVIAIIALLPLPAGLESHTWLYFAVFTGVIVGLILEPVPGAVVAMVGISIIAILSPWLLFSPEQLAQPGFKFTAKSLSWAVSGFSNSVIWLIFAAFMFGTGYEKTGLGRRIALILVKKMGHRTLFLGYAVMFSELILAPVTPSNSARGAGIIYPIIRNLPPLYQSQPNDSSSRSIGSYIMWMGIVADCVTSAIFLTAMAPNLLLIGLMKSASNATLSWGDWFLGMLPLSILLVLLVPWLAYVLYPPILKSGDQVPRWAETELQAMGPLCSREKRMLGLMVGALVLWIFGGDYIDAAMVGYSVVALMLLLRIICWDDIVSNKAAWNVFFWLASLITLATGLNNTGFISWFGKLLAGSLSGYSPTIVMVALIVVFYLLRYFFASATAYTSALAPMMIAAALAMPEIPLPVFCLMVGAAIGLGSILTPYATGPSPIYYGSGYLPTVDYWRLGAIFGLIFLVLLVITGLLWMPMVLL.

14 helical membrane-spanning segments follow: residues 10-30 (YLAPLAVIAIIALLPLPAGLE), 33-53 (TWLYFAVFTGVIVGLILEPVP), 54-74 (GAVVAMVGISIIAILSPWLLF), 93-113 (WAVSGFSNSVIWLIFAAFMFG), 137-157 (TLFLGYAVMFSELILAPVTPS), 189-209 (IGSYIMWMGIVADCVTSAIFL), 236-256 (FLGMLPLSILLVLLVPWLAYV), 292-312 (LMVGALVLWIFGGDYIDAAMV), 313-333 (GYSVVALMLLLRIICWDDIVS), 340-360 (VFFWLASLITLATGLNNTGFI), 370-390 (SLSGYSPTIVMVALIVVFYLL), 393-413 (FFASATAYTSALAPMMIAAAL), 418-438 (IPLPVFCLMVGAAIGLGSILT), and 462-482 (LGAIFGLIFLVLLVITGLLWM).

This sequence belongs to the SLC13A/DASS transporter (TC 2.A.47) family. DIT1 subfamily.

Its subcellular location is the cell inner membrane. It carries out the reaction (2R,3R)-tartrate(out) + succinate(in) = (2R,3R)-tartrate(in) + succinate(out). Functionally, catalyzes the uptake of tartrate in exchange for intracellular succinate. Essential for anaerobic L-tartrate fermentation. This is L-tartrate/succinate antiporter (ttdT) from Escherichia coli O6:H1 (strain CFT073 / ATCC 700928 / UPEC).